The chain runs to 885 residues: Dipeptidyl peptidase 9 (885 aa).

Residues serine 752, aspartate 830, and histidine 862 each act as charge relay system in the active site. Serine 752 contacts Val-boroPro.

Belongs to the peptidase S9B family. DPPIV subfamily. In terms of assembly, homodimer. Forms a ternary complex with NLRP1, composed of a DPP9 homodimer, one full-length NLRP1 protein, and one cleaved C-terminus of NLRP1 (NACHT, LRR and PYD domains-containing protein 1, C-terminus).

The protein localises to the nucleus. It catalyses the reaction Release of an N-terminal dipeptide, Xaa-Yaa-|-Zaa-, from a polypeptide, preferentially when Yaa is Pro, provided Zaa is neither Pro nor hydroxyproline.. Functionally, dipeptidyl peptidase that cleaves off N-terminal dipeptides from proteins having a Pro or Ala residue at position 2. Acts as a key inhibitor of the NLRP1 inflammasome. The polypeptide is Dipeptidyl peptidase 9 (Danio rerio (Zebrafish)).